A 313-amino-acid polypeptide reads, in one-letter code: Ribosomal RNA small subunit methyltransferase H (313 aa).

S-adenosyl-L-methionine-binding positions include 35 to 37 (GGH), Asp-55, Phe-79, Asp-100, and Gln-107.

Belongs to the methyltransferase superfamily. RsmH family.

The protein resides in the cytoplasm. It catalyses the reaction cytidine(1402) in 16S rRNA + S-adenosyl-L-methionine = N(4)-methylcytidine(1402) in 16S rRNA + S-adenosyl-L-homocysteine + H(+). Functionally, specifically methylates the N4 position of cytidine in position 1402 (C1402) of 16S rRNA. The protein is Ribosomal RNA small subunit methyltransferase H of Burkholderia vietnamiensis (strain G4 / LMG 22486) (Burkholderia cepacia (strain R1808)).